Here is a 278-residue protein sequence, read N- to C-terminus: MATH domain and coiled-coil domain-containing protein At1g31400 (278 aa).

Positions 6-131 constitute an MATH domain; that stretch reads EKRITWTIKN…SGQVKIVAEV (126 aa). A coiled-coil region spans residues 232 to 267; the sequence is KLDWLEKKLKEVGKTRMQQLEQNLKDLKESLCWSSD.

This is MATH domain and coiled-coil domain-containing protein At1g31400 from Arabidopsis thaliana (Mouse-ear cress).